The sequence spans 183 residues: Extracellular superoxide dismutase [Cu-Zn] (183 aa).

Positions Met1–Arg32 are cleaved as a signal peptide. Residue Asn63 is glycosylated (N-linked (GlcNAc...) asparagine). Positions 77, 79, and 94 each coordinate Cu cation. Cys88 and Cys177 are disulfide-bonded. Zn(2+) contacts are provided by His94, His102, His111, and Asp114. A Cu cation-binding site is contributed by His151.

Belongs to the Cu-Zn superoxide dismutase family. Cu cation is required as a cofactor. Zn(2+) serves as cofactor.

Its subcellular location is the secreted. It is found in the extracellular space. The enzyme catalyses 2 superoxide + 2 H(+) = H2O2 + O2. In terms of biological role, destroys radicals which are normally produced within the cells and which are toxic to biological systems. This chain is Extracellular superoxide dismutase [Cu-Zn] (SOD), found in Haemonchus contortus (Barber pole worm).